A 651-amino-acid polypeptide reads, in one-letter code: Acid beta-fructofuranosidase (651 aa).

Residues 1 to 23 (MEHHKPLLPTSSHAAPNPRTRKD) lie on the Cytoplasmic side of the membrane. The propeptide at 1 to 103 (MEHHKPLLPT…LFSGEGGASE (103 aa)) is removed in mature form. Residues 24–44 (LLLLLCALLFLSSLVAFGRNR) traverse the membrane as a helical; Signal-anchor for type II membrane protein segment. Residues 45-651 (ASNVPHDHVS…PFPFNPDQKN (607 aa)) lie on the Lumenal side of the membrane. The disordered stretch occupies residues 48–76 (VPHDHVSSSASNHQQEHQSPTSLPSSKWH). Over residues 54–72 (SSSASNHQQEHQSPTSLPS) the composition is skewed to polar residues. Residues 127–130 (WMND), Q146, W154, and 189–190 (WT) contribute to the substrate site. The active site involves D130. N-linked (GlcNAc...) asparagine glycosylation occurs at N210. Position 253–254 (253–254 (RD)) interacts with substrate. N-linked (GlcNAc...) asparagine glycosylation is present at N275. Substrate contacts are provided by E308 and D343. Cysteines 500 and 548 form a disulfide. The N-linked (GlcNAc...) asparagine glycan is linked to N620.

Belongs to the glycosyl hydrolase 32 family. In terms of assembly, may be present in two forms, a 70 kDa monomer and a heterodimer of the 30 kDa and 38 kDa subunits. The ratio of the levels of the two forms within cells appears to be regulated developmentally.

The protein localises to the membrane. The protein resides in the vacuole lumen. It carries out the reaction Hydrolysis of terminal non-reducing beta-D-fructofuranoside residues in beta-D-fructofuranosides.. The protein operates within glycan biosynthesis; sucrose metabolism. The protein is Acid beta-fructofuranosidase of Phaseolus vulgaris (Kidney bean).